Consider the following 271-residue polypeptide: Elongation factor Ts (271 aa).

Positions 76-79 (TDFV) are involved in Mg(2+) ion dislocation from EF-Tu.

It belongs to the EF-Ts family.

The protein localises to the cytoplasm. Functionally, associates with the EF-Tu.GDP complex and induces the exchange of GDP to GTP. It remains bound to the aminoacyl-tRNA.EF-Tu.GTP complex up to the GTP hydrolysis stage on the ribosome. This chain is Elongation factor Ts, found in Mycobacterium ulcerans (strain Agy99).